Here is a 727-residue protein sequence, read N- to C-terminus: MGRRAKMVEQVVSLMETHDQIRNIGICAHIDHGKTTLSDNLLAGAGMISKDLAGDQLALDFDEEEAERGITIYAANVSMVHECQGKPHLINLIDTPGHVDFGGDVTRAMRAIDGAVVVVCAVEGIMPQTETVLRQALKEKVKPILFINKVDRLLNELKLTPEELQNRFMKIIADVNKLIEKMSPEEFKGKWVVNVMDGSVAFGSAYHNWAISVPYMQKTKITFKDIIDYCEAENQKELAEKAPLHAVLLDMVVTHLPNPVEAQKYRIPNIWKGDLESEIGKAMVNCDPNGPMAGVVTKIIMDKHAGAISACRLFSGRIKQGDELRLVSIKAKARAQQVAVFMGAERVQVPSVSAGNICALTGLKEASAGETVCSPNTILDPSFESITHVSEPVITVAIEAKNTKDLPKLIDVLRQIAKEDNTVRVEINEETGEHLISGMGELHIEVITNTKIGRDAGVEVDVGEPIVVYREAVNGVSPEVEGKSPNKHNRLYFVAEPLDECVYNAHVEGLIKDEDFKKKTPKEVETKLVEIGMNREEAKRVMTIYEGNVLLNMTRGIVQLDEARELIIEGFKEAVKNGPLAAEKCQGVKVKLMDAVFHEDAIHRGPAQLIPAVRTGVRDAIAQANVGLLEPIQNVYISTPQDYMGDAMKELSNRRGQILDMEQEGDMTTIKSKAPVSEMFGFAGAIRGATQGRCLWSIEFGGFEKVPTELQPQIVKEIRTRKGLKTD.

One can recognise a tr-type G domain in the interval 19–260 (DQIRNIGICA…MVVTHLPNPV (242 aa)). Residues 28–35 (AHIDHGKT), 94–98 (DTPGH), and 148–151 (NKVD) each bind GTP. At histidine 603 the chain carries Diphthamide.

Belongs to the TRAFAC class translation factor GTPase superfamily. Classic translation factor GTPase family. EF-G/EF-2 subfamily.

It localises to the cytoplasm. Catalyzes the GTP-dependent ribosomal translocation step during translation elongation. During this step, the ribosome changes from the pre-translocational (PRE) to the post-translocational (POST) state as the newly formed A-site-bound peptidyl-tRNA and P-site-bound deacylated tRNA move to the P and E sites, respectively. Catalyzes the coordinated movement of the two tRNA molecules, the mRNA and conformational changes in the ribosome. The polypeptide is Elongation factor 2 (Methanococcus aeolicus (strain ATCC BAA-1280 / DSM 17508 / OCM 812 / Nankai-3)).